We begin with the raw amino-acid sequence, 332 residues long: MASGLVRLLQQGPRCLLAPVAPKLVPPVRGVKRGFRAAFRFQKELERQRLLRCPPPPVRRSEKPNWDYHAEIQAFGHRLQENFSLDLLKTAFVNSCYIKSEEAKRQQLGIEKEAVLLNLKSNQELSEQGTSFSQTCLTQFLEDEYPDLPTEGIKNLVEFLTGEDVVCHVARNLAVEQLTLSEEFPVPPTVLQQTFFAVIGALLQSSGPERTALFIRDFLITQMTGKELFEMWKIINPMGLLVEELKKRNISAPESRLTRQSGGTTALPLYFVGLYCDKKLIAEGPGETVLVAEEEAARVALRKLYGFTENRRPWNYSKPKETLRAEKSITAS.

The transit peptide at 1-30 (MASGLVRLLQQGPRCLLAPVAPKLVPPVRG) directs the protein to the mitochondrion. The 143-residue stretch at 86 to 228 (DLLKTAFVNS…LITQMTGKEL (143 aa)) folds into the RNase III domain. Residues 236–306 (NPMGLLVEEL…ARVALRKLYG (71 aa)) enclose the DRBM domain.

Belongs to the ribonuclease III family. Mitochondrion-specific ribosomal protein mL44 subfamily. As to quaternary structure, component of the mitochondrial ribosome large subunit (39S) which comprises a 16S rRNA and about 50 distinct proteins.

It localises to the mitochondrion. Functionally, component of the 39S subunit of mitochondrial ribosome. May have a function in the assembly/stability of nascent mitochondrial polypeptides exiting the ribosome. The protein is Large ribosomal subunit protein mL44 (MRPL44) of Pongo abelii (Sumatran orangutan).